The primary structure comprises 385 residues: Protein pelota homolog (385 aa).

It belongs to the eukaryotic release factor 1 family. Pelota subfamily. Component of the Pelota-HBS1L complex, also named Dom34-Hbs1 complex, composed of PELO and HBS1L. A divalent metal cation serves as cofactor.

The protein localises to the cytoplasm. Component of the Pelota-HBS1L complex, a complex that recognizes stalled ribosomes and triggers the No-Go Decay (NGD) pathway. In the Pelota-HBS1L complex, PELO recognizes ribosomes stalled at the 3' end of an mRNA and engages stalled ribosomes by destabilizing mRNA in the mRNA channel. Following mRNA extraction from stalled ribosomes by the SKI complex, the Pelota-HBS1L complex promotes recruitment of ABCE1, which drives the disassembly of stalled ribosomes, followed by degradation of damaged mRNAs as part of the NGD pathway. This Gallus gallus (Chicken) protein is Protein pelota homolog (PELO).